Consider the following 237-residue polypeptide: Photosystem I-associated linker protein CpcL (237 aa).

A PBS-linker domain is found at 11-191 (TTQNQRVQSF…DYRDRAGIVR (181 aa)). A helical membrane pass occupies residues 208-228 (GVAILGVLLAISAGMTFLFVL).

This sequence belongs to the phycobilisome linker protein family. In terms of assembly, part of a specialized phycobilisome (PBS), a structure that is usually composed of two distinct substructures: a core complex and a number of rods radiating from the core. This protein is part of a core-less PBS rod (called CpcL-PBS). In vegetative cells associated substoichiometrically with photosystem I and phycobiliproteins phycocyanin as well as phycoerythrocyanin in the thylakoid membrane, not found in conventional, hemidiscoidal phycobilisomes.

It localises to the cellular thylakoid membrane. Its function is as follows. Rod linker protein, associated with phycocyanin (PC). Linker polypeptides determine the state of aggregation and the location of the disk-shaped phycobiliprotein units within the phycobilisome (PBS) and modulate their spectroscopic properties in order to mediate a directed and optimal energy transfer. Forms a supercomplex with tetrameric photosystem I (PSI) and PC that allows efficient energy transfer from PC to PSI. This protein seems to be in the middle of the PC hexameric rod and may anchor the PC rods at the periphery of PSI tetramers. May be involved in the cyclic electron transport around PSI that provides ATP needed for N(2) fixation in heterocysts. This is Photosystem I-associated linker protein CpcL from Nostoc sp. (strain PCC 7120 / SAG 25.82 / UTEX 2576).